We begin with the raw amino-acid sequence, 56 residues long: Ovomucoid (56 aa).

Residues 6–56 (VDCSDHPKPACLQEQKPICGSDNKTYDNKCSFCNAVVDSNGTLTLSHFGKC) enclose the Kazal-like domain. 3 disulfide bridges follow: Cys-8-Cys-38, Cys-16-Cys-35, and Cys-24-Cys-56. A glycan (N-linked (GlcNAc...) asparagine) is linked at Asn-45.

It localises to the secreted. The protein is Ovomucoid of Ortalis vetula (Plain chachalaca).